Consider the following 288-residue polypeptide: uncharacterized protein (288 aa).

One can recognise an HTH rpiR-type domain in the interval 5 to 81 (GNVLNKIGSL…LELSIELATK (77 aa)). A DNA-binding region (H-T-H motif) is located at residues 41-60 (LSEIAKHLQVGEATLVRFCR). The 141-residue stretch at 129–269 (VVKVLKKARR…YALLVQGEED (141 aa)) folds into the SIS domain.

This is an uncharacterized protein from Haemophilus influenzae (strain ATCC 51907 / DSM 11121 / KW20 / Rd).